A 206-amino-acid polypeptide reads, in one-letter code: Dual specificity phosphatase 29 (206 aa).

The region spanning 47–194 (HVNQVWPSVY…LRALDITLQE (148 aa)) is the Tyrosine-protein phosphatase domain. Residue 138-145 (HCVMGRSR) participates in substrate binding. The active-site Phosphocysteine intermediate is the cysteine 139.

It belongs to the protein-tyrosine phosphatase family. Non-receptor class dual specificity subfamily.

It localises to the cytoplasm. Its subcellular location is the nucleus. It carries out the reaction O-phospho-L-tyrosyl-[protein] + H2O = L-tyrosyl-[protein] + phosphate. The enzyme catalyses O-phospho-L-seryl-[protein] + H2O = L-seryl-[protein] + phosphate. The catalysed reaction is O-phospho-L-threonyl-[protein] + H2O = L-threonyl-[protein] + phosphate. In terms of biological role, dual specificity phosphatase able to dephosphorylate phosphotyrosine, phosphoserine and phosphothreonine residues within the same substrate, with a preference for phosphotyrosine as a substrate. Involved in the modulation of AMPK and MAPK1/2 signaling pathways. The polypeptide is Dual specificity phosphatase 29 (dusp29) (Gasterosteus aculeatus (Three-spined stickleback)).